Consider the following 449-residue polypeptide: Gamma-aminobutyric acid receptor subunit delta (449 aa).

An N-terminal signal peptide occupies residues 1–24; it reads MDVLGWLLLPLLLLCTQPHHGARA. Residues 25-251 are Extracellular-facing; sequence MNDIGDYVGS…QLRRNRGVYI (227 aa). N-linked (GlcNAc...) asparagine glycans are attached at residues Asn-103 and Asn-106. The cysteines at positions 164 and 178 are disulfide-linked. The chain crosses the membrane as a helical span at residues 252–271; the sequence is IQSYMPSVLLVAMSWVSFWI. Topologically, residues 272–275 are cytoplasmic; sequence SQAA. Residues 276 to 298 form a helical membrane-spanning segment; that stretch reads VPARVSLGITTVLTMTTLMVSAR. Over 299–308 the chain is Extracellular; it reads SSLPRASAIK. A helical membrane pass occupies residues 309–331; that stretch reads ALDVYFWICYVFVFAALVEYAFA. Residues 332 to 423 are Cytoplasmic-facing; that stretch reads HFNADYRKKR…SRLKPIDADT (92 aa). Ser-390 bears the Phosphoserine mark. A helical transmembrane segment spans residues 424–446; that stretch reads IDIYARAVFPAAFAAVNIIYWAA. Over 447-449 the chain is Extracellular; the sequence is YTM.

This sequence belongs to the ligand-gated ion channel (TC 1.A.9) family. Gamma-aminobutyric acid receptor (TC 1.A.9.5) subfamily. GABRD sub-subfamily. As to quaternary structure, heteropentamer, formed by a combination of alpha (GABRA1-6), beta (GABRB1-3), gamma (GABRG1-3), delta (GABRD), epsilon (GABRE), rho (GABRR1-3), pi (GABRP) and theta (GABRQ) chains, each subunit exhibiting distinct physiological and pharmacological properties. As to expression, found in the brain, in cerebellar granule cells. Expressed in lungs, in alveolar epithelium.

The protein resides in the cell membrane. The enzyme catalyses chloride(in) = chloride(out). Its function is as follows. Delta subunit of the heteropentameric ligand-gated chloride channel gated by gamma-aminobutyric acid (GABA), a major inhibitory neurotransmitter in the brain. GABA-gated chloride channels, also named GABA(A) receptors (GABAAR), consist of five subunits arranged around a central pore and contain GABA active binding site(s) located at the alpha and beta subunit interface(s). When activated by GABA, GABAARs selectively allow the flow of chloride anions across the cell membrane down their electrochemical gradient. GABAARs containing delta/GABRD subunits are predominantly expressed and located in extrasynaptic or perisynaptic positions on hippocampus and cerebellar granule cells, and contribute to the tonic GABAergic inhibition. GABAAR containing alpha-4-beta-3-delta subunits can simultaneously bind GABA and histamine where histamine binds at the interface of two neighboring beta subunits, which may be involved in the regulation of sleep and wakefulness. The chain is Gamma-aminobutyric acid receptor subunit delta from Rattus norvegicus (Rat).